Here is a 295-residue protein sequence, read N- to C-terminus: Trimeric intracellular cation channel type A (295 aa).

At 1 to 18 the chain is on the lumenal side; sequence MEVLDVLNLGEIAQYFSK. Residues 19-37 form a helical membrane-spanning segment; the sequence is MAMFPVFDVAYYIVSILYL. At 38 to 51 the chain is on the cytoplasmic side; sequence KYEPGAVEVSRRSP. A helical transmembrane segment spans residues 52-75; it reads VASWLCAMLYCFGSYILADIMLGV. Ca(2+) is bound at residue Gly-74. The Lumenal portion of the chain corresponds to 76–86; sequence CPIDYFHNNSH. The chain crosses the membrane as a helical span at residues 87-106; the sequence is ILLASAVWYLIFFCPLNLFY. Residues 107-144 are Cytoplasmic-facing; that stretch reads KCVAFMPVKLVLVALKEVVRTRKIAAGVHHAHHAYHHG. Residues Lys-122 and Arg-126 each coordinate a 1,2-diacyl-sn-glycero-3-phospho-(1D-myo-inositol-4,5-bisphosphate). Residues 145-162 traverse the membrane as a helical segment; that stretch reads WLIMVITGYVKGSGVALM. The Lumenal portion of the chain corresponds to 163 to 182; that stretch reads SNFEQLLRGVWKPETNEVLN. Residues 183–199 form a helical membrane-spanning segment; it reads MSFPTKASLYGAILFTL. Over 200–210 the chain is Cytoplasmic; the sequence is QEAHVLPVSKS. A helical membrane pass occupies residues 211–227; it reads TLICLFTLFMVSSKVFM. The Lumenal portion of the chain corresponds to 228–236; that stretch reads TARHSHGSP. The chain crosses the membrane as a helical span at residues 237–255; sequence FALIESWVCHVLFGSPLGT. The Cytoplasmic portion of the chain corresponds to 256–295; it reads EDAHDHHHAAPAAAPAPLSPAKNKEELSEGTRKRKSKKAE. Residues 259–295 are disordered; that stretch reads HDHHHAAPAAAPAPLSPAKNKEELSEGTRKRKSKKAE. A compositionally biased stretch (low complexity) spans 265–276; it reads APAAAPAPLSPA. Over residues 277 to 286 the composition is skewed to basic and acidic residues; the sequence is KNKEELSEGT.

Belongs to the TMEM38 family. In terms of assembly, homotrimer; conformation seems to be controled by binding to diacylglycerol (DAG).

Its subcellular location is the sarcoplasmic reticulum membrane. The protein resides in the nucleus membrane. It carries out the reaction K(+)(in) = K(+)(out). With respect to regulation, channel activity is activated by a change of voltage within the sarcoplasmic reticulum lumen and blocked by luminal high Ca(2+) levels. Intracellular monovalent cation channel required for maintenance of rapid intracellular calcium release. Acts as a potassium counter-ion channel that functions in synchronization with calcium release from intracellular stores. Opened by a change of voltage within the sarcoplasmic reticulum lumen. This chain is Trimeric intracellular cation channel type A (tmem38a), found in Danio rerio (Zebrafish).